Here is a 130-residue protein sequence, read N- to C-terminus: Small ribosomal subunit protein uS17m (130 aa).

Residues 1 to 20 (MSVVRSSVHARWIVGKVIGT) constitute a mitochondrion transit peptide.

The protein belongs to the universal ribosomal protein uS17 family. As to quaternary structure, component of the mitochondrial small ribosomal subunit (mt-SSU). Mature mammalian 55S mitochondrial ribosomes consist of a small (28S) and a large (39S) subunit. The 28S small subunit contains a 12S ribosomal RNA (12S mt-rRNA) and 30 different proteins. The 39S large subunit contains a 16S rRNA (16S mt-rRNA), a copy of mitochondrial valine transfer RNA (mt-tRNA(Val)), which plays an integral structural role, and 52 different proteins.

It is found in the mitochondrion. The protein is Small ribosomal subunit protein uS17m (MRPS17) of Homo sapiens (Human).